Reading from the N-terminus, the 584-residue chain is Protein disulfide-isomerase-like protein of the testis (584 aa).

Positions 1–20 (MDLLWMPLLLVAACVSAVHS) are cleaved as a signal peptide. Residues N58, N128, N160, and N340 are each glycosylated (N-linked (GlcNAc...) asparagine). The Thioredoxin domain occupies 388-451 (LVKQLVGKNF…IAKIDVTAND (64 aa)). N540 carries an N-linked (GlcNAc...) asparagine glycan. A Prevents secretion from ER motif is present at residues 581 to 584 (KEEL).

This sequence belongs to the protein disulfide isomerase family. In terms of assembly, homodimer. The homodimer is not disulfide-linked. Interacts with ERO1A and CLGN. In terms of processing, N-glycosylated. As to expression, testis-specific.

The protein resides in the endoplasmic reticulum. Its function is as follows. Probable redox-inactive chaperone involved in spermatogenesis. The polypeptide is Protein disulfide-isomerase-like protein of the testis (PDILT) (Homo sapiens (Human)).